A 331-amino-acid chain; its full sequence is Thioredoxin-like fold domain-containing protein MRL7, chloroplastic (331 aa).

Residues 1-59 (MSFFAVACSAPRSSMLLTGLNSSFSDMHRSPLFVFPVTISSRSVKRFAAVSSDSVLDPE) constitute a chloroplast transit peptide. Disordered regions lie at residues 52 to 105 (SDSV…ADAV) and 141 to 160 (GVDEEEEEEEEMVVEEEDPD). Residues 142 to 160 (VDEEEEEEEEMVVEEEDPD) are compositionally biased toward acidic residues.

Component of the transcriptionally active chromosome (TAC) complexes. Interacts with FSD2 and PRDA1. Interacts with FSD3 and CITRX/TRXZ. Binds to PTAC12/HMR/PAP5. Expressed in leaves, shoots, stems, cauline leaves, flower buds, flowers and siliques.

The protein localises to the plastid. Its subcellular location is the chloroplast. It is found in the chloroplast stroma. It localises to the chloroplast nucleoid. The protein resides in the nucleus. Its function is as follows. Plays an essential role in early steps of chloroplast development. Involved in the regulation of plastid gene expression. May positively regulate plastid-encoded RNA polymerase (PEP) activity through binding to FSD3 and CITRX/TRXZ. Involved in redox-mediated regulation of chloroplast development. Possesses disulfide reductase activity in vitro. Required for the proper function of the plastid transcriptional machinery and protein accumulation in thylakoid membranes. May function as molecular chaperone to ensure proper organization of the nucleoids in chloroplasts. May mediate some aspect of thylakoid structure or function that controls non-photochemical quenching (NPQ). Participates in the early light signaling events of photobody biogenesis in chloroplasts. May mediate the degradation of two repressors of chloroplast biogenesis, PIF1 and PIF3 in nucleus. Collaboratively with PTAC12/HMR/PAP5, involved in the regulation of thermoresponsive responses via the stabilization of PIF4 in the daytime to initiate thermomorphogenesis. The sequence is that of Thioredoxin-like fold domain-containing protein MRL7, chloroplastic from Arabidopsis thaliana (Mouse-ear cress).